The sequence spans 129 residues: Keratin-associated protein 5-6 (129 aa).

A run of 6 repeats spans residues 28-31 (CCVP), 34-37 (CCKP), 40-43 (CCVP), 90-93 (CCKP), 109-112 (CCKP), and 119-122 (CCVP). The segment at 28-112 (CCVPICCCKP…SCCQSSCCKP (85 aa)) is 6 X 4 AA repeats of C-C-X-P.

The protein belongs to the KRTAP type 5 family. As to quaternary structure, interacts with hair keratins. As to expression, expressed in hair root and not in skin. Expressed also in liver and skeletal muscle.

Its function is as follows. In the hair cortex, hair keratin intermediate filaments are embedded in an interfilamentous matrix, consisting of hair keratin-associated protein (KRTAP), which are essential for the formation of a rigid and resistant hair shaft through their extensive disulfide bond cross-linking with abundant cysteine residues of hair keratins. The matrix proteins include the high-sulfur and high-glycine-tyrosine keratins. The chain is Keratin-associated protein 5-6 (KRTAP5-6) from Homo sapiens (Human).